The sequence spans 51 residues: Light-harvesting protein B-800/850 beta chain (51 aa).

Residues 2–23 lie on the Cytoplasmic side of the membrane; that stretch reads ADDANKVWPSGLTTAEAEELQK. Residues 24–46 form a helical membrane-spanning segment; the sequence is GLVDGTRVFGVIAVLAHILAYAY. A bacteriochlorophyll is bound at residue histidine 40. At 47-51 the chain is on the periplasmic side; that stretch reads TPWLH.

Belongs to the antenna complex beta subunit family. An alpha/beta heterodimer conjugated to 3 bacteriochlorophyll molecules. The core complex is formed by different alpha and beta chains, binding bacteriochlorophyll molecules, and arranged most probably in tetrameric structures disposed around the reaction center. The non-pigmented gamma chains may constitute additional components.

It is found in the cell inner membrane. Functionally, antenna complexes are light-harvesting systems, which transfer the excitation energy to the reaction centers. The polypeptide is Light-harvesting protein B-800/850 beta chain (pucB) (Rubrivivax gelatinosus (Rhodocyclus gelatinosus)).